The primary structure comprises 217 residues: C-type lectin domain family 2 member I (217 aa).

The Cytoplasmic segment spans residues Met-1–Lys-53. A helical; Signal-anchor for type II membrane protein membrane pass occupies residues Leu-54–Ala-74. Over Leu-75–Val-217 the chain is Extracellular. Cys-92 and Cys-103 are oxidised to a cystine. Positions Val-99–Ser-203 constitute a C-type lectin domain. Asn-112 is a glycosylation site (N-linked (GlcNAc...) asparagine). Cys-120 and Cys-202 form a disulfide bridge.

Detected in osteoblasts, growth plate chondrocytes and skeletal muscle overlying the bone (at protein level). Detected in spleen, B-cells, dendritic cells, thymus, and in IL2-activated natural killer cells.

Its subcellular location is the cell membrane. Inhibits osteoclast formation. Receptor for KLRB1F. Enhances T-cell activation. Plays a role in splenocyte activation, T-cell responses and IL-2 production. The polypeptide is C-type lectin domain family 2 member I (Clec2i) (Mus musculus (Mouse)).